Reading from the N-terminus, the 428-residue chain is Trigger factor (428 aa).

The PPIase FKBP-type domain occupies 163–248 (GDTVVIDFEG…LHEIKTKQLP (86 aa)).

This sequence belongs to the FKBP-type PPIase family. Tig subfamily.

The protein resides in the cytoplasm. The catalysed reaction is [protein]-peptidylproline (omega=180) = [protein]-peptidylproline (omega=0). In terms of biological role, involved in protein export. Acts as a chaperone by maintaining the newly synthesized protein in an open conformation. Functions as a peptidyl-prolyl cis-trans isomerase. The sequence is that of Trigger factor from Anoxybacillus flavithermus (strain DSM 21510 / WK1).